Here is a 496-residue protein sequence, read N- to C-terminus: 1-aminocyclopropane-1-carboxylate synthase 2 (496 aa).

Residues Glu-55 and Tyr-93 each coordinate substrate. Lys-279 is modified (N6-(pyridoxal phosphate)lysine). Residues Ser-483, Ser-488, and Ser-491 each carry the phosphoserine modification.

Belongs to the class-I pyridoxal-phosphate-dependent aminotransferase family. As to quaternary structure, homodimer and heterodimer. In vivo, the relevance of heterodimerization with other ACS enzymes is however unsure. Interacts with GRF3. Pyridoxal 5'-phosphate serves as cofactor. In terms of processing, phosphorylated on serine residue by MAP kinase (MPK6). Post-translationally, may be processed at its C-terminus. In terms of tissue distribution, high in developing leaves and in flowers. Expressed in roots and siliques.

The enzyme catalyses S-adenosyl-L-methionine = 1-aminocyclopropane-1-carboxylate + S-methyl-5'-thioadenosine + H(+). It functions in the pathway alkene biosynthesis; ethylene biosynthesis via S-adenosyl-L-methionine; ethylene from S-adenosyl-L-methionine: step 1/2. Its function is as follows. 1-aminocyclopropane-1-carboxylate synthase (ACS) enzymes catalyze the conversion of S-adenosyl-L-methionine (SAM) into 1-aminocyclopropane-1-carboxylate (ACC), a direct precursor of ethylene. This is 1-aminocyclopropane-1-carboxylate synthase 2 (ACS2) from Arabidopsis thaliana (Mouse-ear cress).